The primary structure comprises 548 residues: Alpha-1,3-mannosyl-glycoprotein 4-beta-N-acetylglucosaminyltransferase B (548 aa).

Topologically, residues 1–7 are cytoplasmic; it reads MRLRNGT. Residues 8 to 28 form a helical; Signal-anchor for type II membrane protein membrane-spanning segment; sequence FLTLLLFCLCAFLSLSWYAAL. The Lumenal segment spans residues 29-548; that stretch reads SGQKGDVVDI…LSEIFLKKAD (520 aa). A coiled-coil region spans residues 36–83; it reads VDIYQREFLALRDRLHAAEQESLKRSKELNLVLEEIKRAVSERQALRD. N-linked (GlcNAc...) asparagine glycans are attached at residues Asn-87 and Asn-103.

Belongs to the glycosyltransferase 54 family. Interacts with SLC35A3. It depends on a divalent metal cation as a cofactor. Post-translationally, N-glycosylated.

Its subcellular location is the golgi apparatus membrane. The catalysed reaction is N(4)-{beta-D-GlcNAc-(1-&gt;2)-alpha-D-Man-(1-&gt;3)-[beta-D-GlcNAc-(1-&gt;2)-alpha-D-Man-(1-&gt;6)]-beta-D-Man-(1-&gt;4)-beta-D-GlcNAc-(1-&gt;4)-beta-D-GlcNAc}-L-asparaginyl-[protein] + UDP-N-acetyl-alpha-D-glucosamine = N(4)-{beta-D-GlcNAc-(1-&gt;2)-[beta-D-GlcNAc-(1-&gt;4)]-alpha-D-Man-(1-&gt;3)-[beta-D-GlcNAc-(1-&gt;2)-alpha-D-Man-(1-&gt;6)]-beta-D-Man-(1-&gt;4)-beta-D-GlcNAc-(1-&gt;4)-beta-D-GlcNAc}-L-asparaginyl-[protein] + UDP + H(+). It catalyses the reaction an N(4)-{beta-D-GlcNAc-(1-&gt;2)-alpha-D-Man-(1-&gt;3)-[alpha-D-Man-(1-&gt;6)]-beta-D-Man-(1-&gt;4)-beta-D-GlcNAc-(1-&gt;4)-beta-D-GlcNAc}-L-asparaginyl-[protein] + UDP-N-acetyl-alpha-D-glucosamine = an N(4)-{beta-D-GlcNAc-(1-&gt;2)-[beta-D-GlcNAc-(1-&gt;4)]-alpha-D-Man-(1-&gt;3)-[alpha-D-Man-(1-&gt;6)]-beta-D-Man-(1-&gt;4)-beta-D-GlcNAc-(1-&gt;4)-beta-D-GlcNAc}-L-asparaginyl-[protein] + UDP + H(+). The enzyme catalyses an N(4)-{beta-D-GlcNAc-(1-&gt;2)-alpha-D-Man-(1-&gt;3)-[beta-D-GlcNAc-(1-&gt;2)-[beta-D-GlcNAc-(1-&gt;6)]-alpha-D-Man-(1-&gt;6)]-beta-D-Man-(1-&gt;4)-beta-D-GlcNAc-(1-&gt;4)-beta-D-GlcNAc}-L-asparaginyl-[protein] + UDP-N-acetyl-alpha-D-glucosamine = an N(4)-{beta-D-GlcNAc-(1-&gt;2)-[beta-D-GlcNAc-(1-&gt;4)]-alpha-D-Man-(1-&gt;3)-[beta-D-GlcNAc-(1-&gt;2)-[beta-D-GlcNAc-(1-&gt;6)]-alpha-D-Man-(1-&gt;6)]-beta-D-Man-(1-&gt;4)-beta-D-GlcNAc-(1-&gt;4)-beta-D-GlcNAc}-L-asparaginyl-[protein] + UDP + H(+). It carries out the reaction an N(4)-{beta-D-GlcNAc-(1-&gt;2)-alpha-D-Man-(1-&gt;3)-[beta-D-GlcNAc-(1-&gt;2)-alpha-D-Man-(1-&gt;6)]-beta-D-Man-(1-&gt;4)-beta-D-GlcNAc-(1-&gt;4)-[alpha-L-Fuc-(1-&gt;6)]-beta-D-GlcNAc}-L-asparaginyl-[protein] + UDP-N-acetyl-alpha-D-glucosamine = N(4)-{beta-D-GlcNAc-(1-&gt;2)-[beta-D-GlcNAc-(1-&gt;4)]-alpha-D-Man-(1-&gt;3)-[beta-D-GlcNAc-(1-&gt;2)-alpha-D-Man-(1-&gt;6)]-beta-D-Man-(1-&gt;4)-beta-D-GlcNAc-(1-&gt;4)-[alpha-L-Fuc-(1-&gt;6)]-beta-D-GlcNAc}-asparaginyl-[protein] + UDP + H(+). The catalysed reaction is an N(4)-{beta-D-GlcNAc-(1-&gt;2)-alpha-D-Man-(1-&gt;3)-[beta-D-Gal-(1-&gt;4)-beta-D-GlcNAc-(1-&gt;2)-alpha-D-Man-(1-&gt;6)]-beta-D-Man-(1-&gt;4)-beta-D-GlcNAc-(1-&gt;4)-beta-D-GlcNAc}-L-asparaginyl-[protein] + UDP-N-acetyl-alpha-D-glucosamine = an N(4)-{beta-D-GlcNAc-(1-&gt;2)-[beta-D-GlcNAc-(1-&gt;4)]-alpha-D-Man-(1-&gt;3)-[beta-D-Gal-(1-&gt;4)-beta-D-GlcNAc-(1-&gt;2)-alpha-D-Man-(1-&gt;6)]-beta-D-Man-(1-&gt;4)-beta-D-GlcNAc-(1-&gt;4)-beta-D-GlcNAc}-L-asparaginyl-[protein] + UDP + H(+). It catalyses the reaction N(4)-{beta-D-GlcNAc-(1-&gt;2)-alpha-D-Man-(1-&gt;3)-[alpha-D-Man-(1-&gt;3)-{alpha-D-Man-(1-&gt;6)}-alpha-D-Man-(1-&gt;6)]-beta-D-Man-(1-&gt;4)-beta-D-GlcNAc-(1-&gt;4)-beta-D-GlcNAc}-asparaginyl-[protein] + UDP-N-acetyl-alpha-D-glucosamine = N(4)-{beta-D-GlcNAc-(1-&gt;2)-[beta-D-GlcNAc-(1-&gt;4)]-alpha-D-Man-(1-&gt;3)-[alpha-D-Man-(1-&gt;3)-{alpha-D-Man-(1-&gt;6)}-alpha-D-Man-(1-&gt;6)]-beta-D-Man-(1-&gt;4)-beta-D-GlcNAc-(1-&gt;4)-beta-D-GlcNAc}-asparaginyl-[protein] + UDP + H(+). The enzyme catalyses N(4)-{beta-D-GlcNAc-(1-&gt;2)-alpha-D-Man-(1-&gt;3)-beta-D-Man-(1-&gt;4)-beta-D-GlcNAc-(1-&gt;4)-beta-D-GlcNAc}-asparaginyl-[protein] + UDP-N-acetyl-alpha-D-glucosamine = N(4)-{beta-D-GlcNAc-(1-&gt;2)-[beta-D-GlcNAc-(1-&gt;4)]-alpha-D-Man-(1-&gt;3)-beta-D-Man-(1-&gt;4)-beta-D-GlcNAc-(1-&gt;4)-beta-D-GlcNAc}-asparaginyl-[protein] + UDP + H(+). It functions in the pathway protein modification; protein glycosylation. In terms of biological role, glycosyltransferase that catalyzes the transfer of GlcNAc from UDP-GlcNAc to the GlcNAcbeta1-2Manalpha1-3 arm of the core structure of N-linked glycans through a beta1-4 linkage and participates in the production of tri- and tetra-antennary N-linked sugar chains. Prefers complex-type N-glycans over hybrid-types. Has lower affinities for donors or acceptors than MGAT4A, suggesting that, under physiological conditions, it is not the main contributor in N-glycan biosynthesis. In Mus musculus (Mouse), this protein is Alpha-1,3-mannosyl-glycoprotein 4-beta-N-acetylglucosaminyltransferase B.